Here is a 480-residue protein sequence, read N- to C-terminus: ATP synthase subunit beta, chloroplastic (480 aa).

161 to 168 provides a ligand contact to ATP; it reads GGAGVGKT.

It belongs to the ATPase alpha/beta chains family. As to quaternary structure, F-type ATPases have 2 components, CF(1) - the catalytic core - and CF(0) - the membrane proton channel. CF(1) has five subunits: alpha(3), beta(3), gamma(1), delta(1), epsilon(1). CF(0) has four main subunits: a(1), b(1), b'(1) and c(9-12).

The protein resides in the plastid. It localises to the chloroplast thylakoid membrane. The enzyme catalyses ATP + H2O + 4 H(+)(in) = ADP + phosphate + 5 H(+)(out). Its function is as follows. Produces ATP from ADP in the presence of a proton gradient across the membrane. The catalytic sites are hosted primarily by the beta subunits. The sequence is that of ATP synthase subunit beta, chloroplastic from Tetradesmus obliquus (Green alga).